The primary structure comprises 221 residues: Toxin coregulated pilus biosynthesis protein P (221 aa).

The ompR/PhoB-type DNA-binding region spans 5-109 (RVIYQFPDNL…VKLQGYRINI (105 aa)). Residues 143-163 (VVPYLVFSALYVALLPVIWWS) form a helical membrane-spanning segment.

The protein localises to the cell membrane. Its function is as follows. Involved in TCP pilus biogenesis. The protein is Toxin coregulated pilus biosynthesis protein P (tcpP) of Vibrio cholerae serotype O1 (strain ATCC 39315 / El Tor Inaba N16961).